A 147-amino-acid polypeptide reads, in one-letter code: Large ribosomal subunit protein bL9 (147 aa).

Belongs to the bacterial ribosomal protein bL9 family.

Its function is as follows. Binds to the 23S rRNA. This chain is Large ribosomal subunit protein bL9, found in Geotalea uraniireducens (strain Rf4) (Geobacter uraniireducens).